The chain runs to 859 residues: DNA mismatch repair protein MutS (859 aa).

618-625 (GPNMGGKS) contributes to the ATP binding site.

This sequence belongs to the DNA mismatch repair MutS family.

In terms of biological role, this protein is involved in the repair of mismatches in DNA. It is possible that it carries out the mismatch recognition step. This protein has a weak ATPase activity. This chain is DNA mismatch repair protein MutS, found in Shewanella sediminis (strain HAW-EB3).